Consider the following 1093-residue polypeptide: Regulator of nonsense transcripts 1 homolog (1093 aa).

The segment at 42–79 (YGVYGGRGPRGNGRRRHDDDDNETEVLDDDDDESLASV) is disordered. Acidic residues predominate over residues 61 to 75 (DDNETEVLDDDDDES). A Upf1 CH-rich domain is found at 95–252 (EKELPPHACA…AKLEEMWKEA (158 aa)). Positions 103, 106, 117, 120, 125, 135, 139, 145, 163, 166, 189, and 193 each coordinate Zn(2+). Residues 103–135 (CAYCGIHSPSSVVKCLTCNKWFCSAKGSAFSSH) are C3H. The CC/SHH/C stretch occupies residues 117-145 (CLTCNKWFCSAKGSAFSSHIVNHLVRARH). Positions 163–193 (CYNCGTKNVFILGFIPAKSDTVVVLLCRQPC) are C4. Residues Gln-460, 480 to 484 (GTGKT), Gln-650, Tyr-687, and Glu-818 contribute to the ATP site.

This sequence belongs to the DNA2/NAM7 helicase family.

It localises to the cytoplasm. The enzyme catalyses ATP + H2O = ADP + phosphate + H(+). Functionally, RNA-dependent helicase required for nonsense-mediated decay (NMD) of aberrant mRNAs containing premature stop codons and modulates the expression level of normal mRNAs. Also capable of unwinding double-stranded DNA and translocating on single-stranded DNA. The chain is Regulator of nonsense transcripts 1 homolog from Neurospora crassa (strain ATCC 24698 / 74-OR23-1A / CBS 708.71 / DSM 1257 / FGSC 987).